A 269-amino-acid chain; its full sequence is Phosphonates import ATP-binding protein PhnC (269 aa).

In terms of domain architecture, ABC transporter spans 2–245; that stretch reads LVVEGLTCRF…VARELYDLEA (244 aa). An ATP-binding site is contributed by 34–41; it reads GRSGAGKS.

This sequence belongs to the ABC transporter superfamily. Phosphonates importer (TC 3.A.1.9.1) family. As to quaternary structure, the complex is composed of two ATP-binding proteins (PhnC), two transmembrane proteins (PhnE) and a solute-binding protein (PhnD).

The protein resides in the cell inner membrane. It carries out the reaction phosphonate(out) + ATP + H2O = phosphonate(in) + ADP + phosphate + H(+). Functionally, part of the ABC transporter complex PhnCDE involved in phosphonates import. Responsible for energy coupling to the transport system. The sequence is that of Phosphonates import ATP-binding protein PhnC from Bradyrhizobium diazoefficiens (strain JCM 10833 / BCRC 13528 / IAM 13628 / NBRC 14792 / USDA 110).